The primary structure comprises 293 residues: 4-hydroxybenzoate octaprenyltransferase (293 aa).

8 helical membrane-spanning segments follow: residues 19-39, 43-63, 95-115, 135-155, 158-178, 209-229, 231-251, and 266-286; these read PIGILLLLWPTLWAQWLASNG, WLILWIFVMGVVLMRSAGCVV, LLAAGLSLLAFLLILPLNALV, FFAIPQAYLGVAFGFGIPMSY, LWGEVPAEAWLLLAANVFWAI, LTAIAFCYAATLALLAWVGAL, DFSGWYYAGLAAAGAIAVYHL, and FLHNTWFGAAVFGGIVLHFLL.

Belongs to the UbiA prenyltransferase family. Mg(2+) serves as cofactor.

Its subcellular location is the cell inner membrane. It catalyses the reaction all-trans-octaprenyl diphosphate + 4-hydroxybenzoate = 4-hydroxy-3-(all-trans-octaprenyl)benzoate + diphosphate. Its pathway is cofactor biosynthesis; ubiquinone biosynthesis. Its function is as follows. Catalyzes the prenylation of para-hydroxybenzoate (PHB) with an all-trans polyprenyl group. Mediates the second step in the final reaction sequence of ubiquinone-8 (UQ-8) biosynthesis, which is the condensation of the polyisoprenoid side chain with PHB, generating the first membrane-bound Q intermediate 3-octaprenyl-4-hydroxybenzoate. The polypeptide is 4-hydroxybenzoate octaprenyltransferase (Thiobacillus denitrificans (strain ATCC 25259 / T1)).